A 67-amino-acid polypeptide reads, in one-letter code: Large ribosomal subunit protein uL29 (67 aa).

This sequence belongs to the universal ribosomal protein uL29 family.

The chain is Large ribosomal subunit protein uL29 from Desulfitobacterium hafniense (strain DSM 10664 / DCB-2).